A 128-amino-acid chain; its full sequence is MCCNYYGNSCGGCGYGSRYGYGCGYGSGYGCGYGSGYGCGYGSGYGCGYGSGYGCGYGSGYGCGYGSGYGCGYGSGYGCGYGSGYGCGYGSGYGCGYGSGYGCGYGSRYGCGYGSGCCSYRKCYSSCC.

The segment at 11-117 (GGCGYGSRYG…RYGCGYGSGC (107 aa)) is 51 X 2 AA repeats of G-[YCGS].

Belongs to the KRTAP type 21 family. In terms of assembly, interacts with hair keratins. Strong expression in narrowly defined pattern restricted to the lower and middle cortical regions of the hair shaft in both developing and cycling hair. During hair follicle regression (catagen), expression levels decrease until expression is no longer detectable in follicles at resting stage (telogen).

Functionally, in the hair cortex, hair keratin intermediate filaments are embedded in an interfilamentous matrix, consisting of hair keratin-associated proteins (KRTAP), which are essential for the formation of a rigid and resistant hair shaft through their extensive disulfide bond cross-linking with abundant cysteine residues of hair keratins. The matrix proteins include the high-sulfur and high-glycine-tyrosine keratins. The sequence is that of Keratin-associated protein 21-1 (Krtap21-1) from Mus musculus (Mouse).